We begin with the raw amino-acid sequence, 437 residues long: MANVVVIGAQWGDEGKGKITDLLSRSADVVVRYQGGVNAGHTIVVDGQVLKLHLIPSGILYPDTTCLIGSGTVVDPKVLLGELAMLASNDIDASGLKVASTAHVTLPYHRLLDQAMEQQRGNQRIGTTGRGIGPTYSDKAERSGLRMIDLLDEQLLRERLQGPIAAKNLQLQKLYGLEPLDAEEVIAEYADYGRRLSSHVVDCTRAIHDAARARKNILFEGAQGTLLDLDHGTYPYVTSSNPVAGGACIGAGVGPTLIDRVIGVAKAYTTRVGEGPFPTELEGSLSDHLCDRGGEYGTTTGRRRRCGWFDGVIGRYAVEVNGLDCLAITKLDVLDELDEIQVCVAYELDGQRVNHFPSSASEFARCQPVFETLPGWQTSTADCRSLDDLPEKAMSYLRFLADLMEVPIAIVSLGASRDQTIVVEDPIHGPKRALLSA.

GTP-binding positions include Gly-12–Lys-18 and Gly-40–Thr-42. Asp-13 functions as the Proton acceptor in the catalytic mechanism. Residues Asp-13 and Gly-40 each coordinate Mg(2+). IMP-binding positions include Asp-13–Lys-16, Asn-38–His-41, Thr-128, Arg-142, Gln-223, Thr-238, and Arg-302. His-41 functions as the Proton donor in the catalytic mechanism. Thr-298 to Arg-304 is a binding site for substrate. GTP-binding positions include Arg-304, Lys-330–Asp-332, and Ser-412–Gly-414.

Belongs to the adenylosuccinate synthetase family. As to quaternary structure, homodimer. Mg(2+) serves as cofactor.

It localises to the cytoplasm. It catalyses the reaction IMP + L-aspartate + GTP = N(6)-(1,2-dicarboxyethyl)-AMP + GDP + phosphate + 2 H(+). It functions in the pathway purine metabolism; AMP biosynthesis via de novo pathway; AMP from IMP: step 1/2. Its function is as follows. Plays an important role in the de novo pathway of purine nucleotide biosynthesis. Catalyzes the first committed step in the biosynthesis of AMP from IMP. This is Adenylosuccinate synthetase from Synechococcus sp. (strain RCC307).